Consider the following 85-residue polypeptide: Beta-insect depressant toxin BjIT2 (85 aa).

The N-terminal stretch at 1–21 (MKLLLLLVISASMLLECLVNA) is a signal peptide. Residues 22–82 (DGYIRKKDGC…TWKSSTNTCG (61 aa)) enclose the LCN-type CS-alpha/beta domain. Cystine bridges form between cysteine 31/cysteine 81, cysteine 35/cysteine 56, cysteine 42/cysteine 63, and cysteine 46/cysteine 65. Residues 83–85 (RKK) constitute a propeptide, removed by a carboxypeptidase.

This sequence belongs to the long (4 C-C) scorpion toxin superfamily. Sodium channel inhibitor family. Beta subfamily. C-terminal basic residues are removed by a carboxypeptidase. As to expression, expressed by the venom gland.

Its subcellular location is the secreted. Functionally, depressant insect beta-toxins cause a transient contraction paralysis followed by a slow flaccid paralysis. They bind voltage-independently at site-4 of sodium channels (Nav) and shift the voltage of activation toward more negative potentials thereby affecting sodium channel activation and promoting spontaneous and repetitive firing. This toxin is active only on insects. The sequence is that of Beta-insect depressant toxin BjIT2 from Hottentotta judaicus (Black scorpion).